The chain runs to 134 residues: Fluoride-specific ion channel FluC (134 aa).

4 helical membrane-spanning segments follow: residues leucine 7–alanine 27, glycine 38–valine 58, leucine 69–serine 89, and valine 110–histidine 130. The Na(+) site is built by glycine 77 and threonine 80.

It belongs to the fluoride channel Fluc/FEX (TC 1.A.43) family.

Its subcellular location is the cell inner membrane. The catalysed reaction is fluoride(in) = fluoride(out). Na(+) is not transported, but it plays an essential structural role and its presence is essential for fluoride channel function. Functionally, fluoride-specific ion channel. Important for reducing fluoride concentration in the cell, thus reducing its toxicity. The polypeptide is Fluoride-specific ion channel FluC (Legionella pneumophila (strain Lens)).